Reading from the N-terminus, the 409-residue chain is Arginine deiminase (409 aa).

Cys-397 functions as the Amidino-cysteine intermediate in the catalytic mechanism.

It belongs to the arginine deiminase family.

The protein resides in the cytoplasm. It catalyses the reaction L-arginine + H2O = L-citrulline + NH4(+). The protein operates within amino-acid degradation; L-arginine degradation via ADI pathway; carbamoyl phosphate from L-arginine: step 1/2. This Metamycoplasma hominis (Mycoplasma hominis) protein is Arginine deiminase (arcA).